The primary structure comprises 132 residues: Antimicrobial protein Ace-AMP1 (132 aa).

Positions 1-27 (MVRVVSLLAASTFILLIMIISSPYANS) are cleaved as a signal peptide. Disulfide bonds link C31–C76, C41–C54, C55–C100, and C74–C116.

The protein belongs to the plant LTP family. Highly divergent. As to quaternary structure, monomer.

In terms of biological role, antifungal and antibacterial activity against the Gram-positive bacteria B.megaterium and S.lutea. This is Antimicrobial protein Ace-AMP1 from Allium cepa (Onion).